The primary structure comprises 381 residues: uncharacterized protein (381 aa).

9 helical membrane-spanning segments follow: residues L59–M79, G84–M104, V147–A167, S190–I210, L222–I242, I250–W270, H284–A304, L311–F331, and V344–L364.

It belongs to the CDP-alcohol phosphatidyltransferase class-I family.

The protein resides in the membrane. This is an uncharacterized protein from Dictyostelium discoideum (Social amoeba).